Consider the following 247-residue polypeptide: 2,3-bisphosphoglycerate-dependent phosphoglycerate mutase (247 aa).

Residues 7 to 14 (RHGESEWN), 20 to 21 (TG), Arg59, 86 to 89 (ERHY), Lys97, 113 to 114 (RR), and 182 to 183 (GN) each bind substrate. His8 serves as the catalytic Tele-phosphohistidine intermediate. The active-site Proton donor/acceptor is the Glu86.

Belongs to the phosphoglycerate mutase family. BPG-dependent PGAM subfamily.

The catalysed reaction is (2R)-2-phosphoglycerate = (2R)-3-phosphoglycerate. It functions in the pathway carbohydrate degradation; glycolysis; pyruvate from D-glyceraldehyde 3-phosphate: step 3/5. Catalyzes the interconversion of 2-phosphoglycerate and 3-phosphoglycerate. In Treponema denticola (strain ATCC 35405 / DSM 14222 / CIP 103919 / JCM 8153 / KCTC 15104), this protein is 2,3-bisphosphoglycerate-dependent phosphoglycerate mutase.